A 949-amino-acid chain; its full sequence is Syndetin (949 aa).

Residues 1–28 (MQKIKSLMTRQGLRSPQESVHDLSPIEN) are disordered. A compositionally biased stretch (polar residues) spans 8–18 (MTRQGLRSPQE). Coiled coils occupy residues 82-104 (SLQE…LERV) and 198-226 (YSCI…LSKI). A disordered region spans residues 509 to 581 (FEIQADSKDD…ETLRSRKKSD (73 aa)). Positions 569–581 (VSRETLRSRKKSD) are enriched in basic and acidic residues.

The protein belongs to the syndetin family. As to quaternary structure, component of the endosome-associated retrograde protein (EARP) complex.

Its subcellular location is the recycling endosome. It localises to the membrane. Its function is as follows. Acts as a component of the EARP complex that is involved in endocytic recycling. The EARP complex associates with Rab4-positive endosomes and promotes recycling of internalized transferrin receptor (TFRC) to the plasma membrane. The polypeptide is Syndetin (Gallus gallus (Chicken)).